The sequence spans 445 residues: Probable fructoselysine/psicoselysine transporter FrlA (445 aa).

The next 11 membrane-spanning stretches (helical) occupy residues 10 to 32, 39 to 61, 97 to 119, 126 to 143, 153 to 175, 188 to 210, 230 to 252, 272 to 294, 341 to 363, 384 to 406, and 411 to 433; these read LGFW…FVSV, AGTP…PQMC, FWAN…LGFL, LGKF…LLHL, QTLI…IFWF, IGAT…SYTG, RALI…VISG, WIPA…VILG, GIFF…VMCF, LWRT…ILVA, and WAPI…AYAF.

Belongs to the amino acid-polyamine-organocation (APC) superfamily.

It localises to the cell inner membrane. It catalyses the reaction N(6)-(D-fructosyl)-L-lysine(in) = N(6)-(D-fructosyl)-L-lysine(out). The catalysed reaction is N(6)-(D-psicosyl)-L-lysine(in) = N(6)-(D-psicosyl)-L-lysine(out). The protein operates within carbohydrate metabolism; fructoselysine degradation. In terms of biological role, is likely involved in the transport of fructoselysine and psicoselysine to the cytoplasm, where they are degraded. In Escherichia coli O157:H7, this protein is Probable fructoselysine/psicoselysine transporter FrlA (frlA).